Here is a 305-residue protein sequence, read N- to C-terminus: DNA-directed RNA polymerase 35 kDa subunit (305 aa).

It belongs to the poxviridae DNA-directed RNA polymerase 35 kDa subunit family. The DNA-dependent RNA polymerase used for intermediate and late genes expression consists of eight subunits 147 kDa, 133 kDa, 35 kDa, 30 kDa, 22 kDa, 19 kDa, 18 kDa and 7 kDa totalling more than 500 kDa in mass. The same holoenzyme, with the addition of the transcription-specificity factor RAP94, is used for early gene expression.

It is found in the virion. The catalysed reaction is RNA(n) + a ribonucleoside 5'-triphosphate = RNA(n+1) + diphosphate. Part of the DNA-dependent RNA polymerase which catalyzes the transcription of viral DNA into RNA using the four ribonucleoside triphosphates as substrates. Responsible for the transcription of early, intermediate and late genes. DNA-dependent RNA polymerase associates with the early transcription factor (ETF), itself composed of D6 and A7, thereby allowing the early genes transcription. Late transcription, and probably also intermediate transcription, require newly synthesized RNA polymerase. The sequence is that of DNA-directed RNA polymerase 35 kDa subunit (OPG156) from Cynomys gunnisoni (Gunnison's prairie dog).